We begin with the raw amino-acid sequence, 272 residues long: MVSIVNIFMDYWFAEIITIGNEVLSGKTVNTNASHIGRRLTSLGFTVRRITAVMDEVDEIASAFREAIDRKPRVIVSSGGLGPTWDDKTAEGLAKALGVNLELNKTAFDMILEKYMTRKIPITEERKKMAYMPYGAIPVENNEGIAPGIYVYHNNIDILATPGVPREMENVLENFINKMLRNRSNLKYLEDFIYVENVMESSLAPYVKELVKKYDIYIKTHPKSYEMSHPILEIQIAGSGKQEEEIKVKIEKVKFELLDAIKKLNGIIRNSL.

The protein belongs to the CinA family.

In Saccharolobus solfataricus (strain ATCC 35092 / DSM 1617 / JCM 11322 / P2) (Sulfolobus solfataricus), this protein is Protein SSO0103.